A 755-amino-acid polypeptide reads, in one-letter code: Catalase-peroxidase (755 aa).

Residues 93–241 constitute a cross-link (tryptophyl-tyrosyl-methioninium (Trp-Tyr) (with M-267)); sequence WHSAGTYRVF…LAAAHMGLIY (149 aa). Histidine 94 serves as the catalytic Proton acceptor. Residues 241 to 267 constitute a cross-link (tryptophyl-tyrosyl-methioninium (Tyr-Met) (with W-93)); sequence YVNPEGPDGNPDPVAAARDIRVTFGRM. Residue histidine 282 coordinates heme b.

The protein belongs to the peroxidase family. Peroxidase/catalase subfamily. As to quaternary structure, homodimer or homotetramer. Heme b serves as cofactor. Post-translationally, formation of the three residue Trp-Tyr-Met cross-link is important for the catalase, but not the peroxidase activity of the enzyme.

The protein resides in the cytoplasm. The catalysed reaction is H2O2 + AH2 = A + 2 H2O. It catalyses the reaction 2 H2O2 = O2 + 2 H2O. Bifunctional enzyme with both catalase and broad-spectrum peroxidase activity. The chain is Catalase-peroxidase from Podospora anserina (strain S / ATCC MYA-4624 / DSM 980 / FGSC 10383) (Pleurage anserina).